The sequence spans 187 residues: Interferon beta (187 aa).

A signal peptide spans 1–21; it reads MTNKCLLQIALLLCFSTTALS. Tyr-24 bears the Phosphotyrosine mark. Cys-52 and Cys-162 form a disulfide bridge. Residue Asn-101 is glycosylated (N-linked (GlcNAc...) asparagine).

Belongs to the alpha/beta interferon family. In terms of assembly, monomer.

It is found in the secreted. Its function is as follows. Type I interferon cytokine that plays a key role in the innate immune response to infection, developing tumors and other inflammatory stimuli. Signals via binding to high-affinity (IFNAR2) and low-affinity (IFNAR1) heterodimeric receptor, activating the canonical Jak-STAT signaling pathway resulting in transcriptional activation or repression of interferon-regulated genes that encode the effectors of the interferon response, such as antiviral proteins, regulators of cell proliferation and differentiation, and immunoregulatory proteins. Signals mostly via binding to a IFNAR1-IFNAR2 heterodimeric receptor, but can also function with IFNAR1 alone and independently of Jak-STAT pathways. Elicits a wide variety of responses, including antiviral and antibacterial activities, and can regulate the development of B-cells, myelopoiesis and lipopolysaccharide (LPS)-inducible production of tumor necrosis factor. Plays a role in neuronal homeostasis by regulating dopamine turnover and protecting dopaminergic neurons: acts by promoting neuronal autophagy and alpha-synuclein clearance, thereby preventing dopaminergic neuron loss. IFNB1 is more potent than interferon-alpha (IFN-alpha) in inducing the apoptotic and antiproliferative pathways required for control of tumor cell growth. This Homo sapiens (Human) protein is Interferon beta.